Reading from the N-terminus, the 92-residue chain is C-C motif chemokine 4 (92 aa).

An N-terminal signal peptide occupies residues 1–23 (MKLCVSAFSLLLLVAAFCDSVLS). Intrachain disulfides connect Cys-34-Cys-58 and Cys-35-Cys-74.

Belongs to the intercrine beta (chemokine CC) family. As to quaternary structure, homodimer.

Its subcellular location is the secreted. Its function is as follows. Monokine with inflammatory and chemokinetic properties. The sequence is that of C-C motif chemokine 4 (Ccl4) from Rattus norvegicus (Rat).